An 844-amino-acid polypeptide reads, in one-letter code: DNA mismatch repair protein MutS (844 aa).

ATP is bound at residue 602 to 609; it reads GPNMSGKS.

This sequence belongs to the DNA mismatch repair MutS family.

Functionally, this protein is involved in the repair of mismatches in DNA. It is possible that it carries out the mismatch recognition step. This protein has a weak ATPase activity. This chain is DNA mismatch repair protein MutS, found in Streptococcus pneumoniae (strain Hungary19A-6).